The chain runs to 368 residues: Probable endopolygalacturonase A (368 aa).

The signal sequence occupies residues M1 to A18. The propeptide occupies A19–R31. A disulfide bridge connects residues C35 and C50. PbH1 repeat units follow at residues L140–A162, L167–E192, S193–S214, G215–S235, V244–T265, V273–Q295, and T307–G352. D207 serves as the catalytic Proton donor. C209 and C225 are joined by a disulfide. H229 is a catalytic residue. N246 is a glycosylation site (N-linked (GlcNAc...) asparagine). 2 disulfides stabilise this stretch: C335/C340 and C359/C368.

Belongs to the glycosyl hydrolase 28 family.

It localises to the secreted. It catalyses the reaction (1,4-alpha-D-galacturonosyl)n+m + H2O = (1,4-alpha-D-galacturonosyl)n + (1,4-alpha-D-galacturonosyl)m.. Functionally, involved in maceration and soft-rotting of plant tissue. Hydrolyzes the 1,4-alpha glycosidic bonds of de-esterified pectate in the smooth region of the plant cell wall. The protein is Probable endopolygalacturonase A (pgaA) of Neosartorya fischeri (strain ATCC 1020 / DSM 3700 / CBS 544.65 / FGSC A1164 / JCM 1740 / NRRL 181 / WB 181) (Aspergillus fischerianus).